A 436-amino-acid chain; its full sequence is ATP-sensitive inward rectifier potassium channel 14 (436 aa).

Residues 1-83 lie on the Cytoplasmic side of the membrane; the sequence is MGLARALRRL…LSDLFTTCVD (83 aa). Residues 14–43 are disordered; sequence LDSGDSRAGDEEEAGPGLCRNGWAPAPVQS. Residue cysteine 81 is modified to S-nitrosocysteine. Residues 84-110 form a helical membrane-spanning segment; it reads VRWRWMCLLFSCSFLASWLLFGLAFWL. Topologically, residues 111–133 are extracellular; sequence IASLHGDLAAPPPPAPCFSHVAS. Residues 134–150 constitute an intramembrane region (helical; Pore-forming); sequence FLAAFLFALETQTSIGY. A Selectivity filter motif is present at residues 147–152; it reads SIGYGV. At 151-159 the chain is on the extracellular side; it reads GVRSVTEEC. The helical transmembrane segment at 160–187 threads the bilayer; it reads PAAVAAVVLQCIAGCVLDAFVVGAVMAK. The Cytoplasmic segment spans residues 188–436; that stretch reads MAKPKKRNET…TPTLALTLPP (249 aa). The segment covering 400–418 has biased composition (acidic residues); the sequence is QEEDEDDETEEGNGVETED. The tract at residues 400-436 is disordered; the sequence is QEEDEDDETEEGNGVETEDGAASPRVLTPTLALTLPP. The span at 426 to 436 shows a compositional bias: low complexity; the sequence is LTPTLALTLPP.

The protein belongs to the inward rectifier-type potassium channel (TC 1.A.2.1) family. KCNJ14 subfamily. As to expression, expressed preferentially in retina.

The protein resides in the membrane. The enzyme catalyses K(+)(in) = K(+)(out). Its activity is regulated as follows. Channel activity is regulated by variations of cytosolic pH; channels are activated by alkaline and inhibited by acidic pH values. Inhibited by Ba(2+) and Cs(+) in a voltage-dependent manner; sensitivity to those inhibitors is lower than in other Kir channels. In terms of biological role, inward rectifier potassium channels are characterized by a greater tendency to allow potassium to flow into the cell rather than out of it. Their voltage dependence is regulated by the concentration of extracellular potassium; as external potassium is raised, the voltage range of the channel opening shifts to more positive voltages. The sequence is that of ATP-sensitive inward rectifier potassium channel 14 (KCNJ14) from Homo sapiens (Human).